The chain runs to 205 residues: uncharacterized protein (205 aa).

Belongs to the peptidase C56 family.

This is an uncharacterized protein from Methanocaldococcus jannaschii (strain ATCC 43067 / DSM 2661 / JAL-1 / JCM 10045 / NBRC 100440) (Methanococcus jannaschii).